The following is a 465-amino-acid chain: tRNA-2-methylthio-N(6)-dimethylallyladenosine synthase (465 aa).

One can recognise an MTTase N-terminal domain in the interval 5–125 (RKLHIKSYGC…LPELLKRAGN (121 aa)). Residues C14, C50, C88, C166, C170, and C173 each contribute to the [4Fe-4S] cluster site. The region spanning 152-384 (RARGISAFVT…QELIDSQQSA (233 aa)) is the Radical SAM core domain. The region spanning 387 to 449 (KAAIGSTVDV…RYSFLGELVT (63 aa)) is the TRAM domain.

Belongs to the methylthiotransferase family. MiaB subfamily. Monomer. It depends on [4Fe-4S] cluster as a cofactor.

Its subcellular location is the cytoplasm. The catalysed reaction is N(6)-dimethylallyladenosine(37) in tRNA + (sulfur carrier)-SH + AH2 + 2 S-adenosyl-L-methionine = 2-methylsulfanyl-N(6)-dimethylallyladenosine(37) in tRNA + (sulfur carrier)-H + 5'-deoxyadenosine + L-methionine + A + S-adenosyl-L-homocysteine + 2 H(+). Its function is as follows. Catalyzes the methylthiolation of N6-(dimethylallyl)adenosine (i(6)A), leading to the formation of 2-methylthio-N6-(dimethylallyl)adenosine (ms(2)i(6)A) at position 37 in tRNAs that read codons beginning with uridine. The chain is tRNA-2-methylthio-N(6)-dimethylallyladenosine synthase from Bradyrhizobium diazoefficiens (strain JCM 10833 / BCRC 13528 / IAM 13628 / NBRC 14792 / USDA 110).